The following is a 253-amino-acid chain: Indole-3-glycerol phosphate synthase (253 aa).

The protein belongs to the TrpC family.

The catalysed reaction is 1-(2-carboxyphenylamino)-1-deoxy-D-ribulose 5-phosphate + H(+) = (1S,2R)-1-C-(indol-3-yl)glycerol 3-phosphate + CO2 + H2O. Its pathway is amino-acid biosynthesis; L-tryptophan biosynthesis; L-tryptophan from chorismate: step 4/5. This is Indole-3-glycerol phosphate synthase from Bacillus thuringiensis (strain Al Hakam).